A 446-amino-acid chain; its full sequence is ATP-dependent protease ATPase subunit HslU (446 aa).

ATP-binding positions include valine 17, 59–64 (GVGKTE), aspartate 255, glutamate 320, and arginine 392.

Belongs to the ClpX chaperone family. HslU subfamily. A double ring-shaped homohexamer of HslV is capped on each side by a ring-shaped HslU homohexamer. The assembly of the HslU/HslV complex is dependent on binding of ATP.

The protein resides in the cytoplasm. Functionally, ATPase subunit of a proteasome-like degradation complex; this subunit has chaperone activity. The binding of ATP and its subsequent hydrolysis by HslU are essential for unfolding of protein substrates subsequently hydrolyzed by HslV. HslU recognizes the N-terminal part of its protein substrates and unfolds these before they are guided to HslV for hydrolysis. The polypeptide is ATP-dependent protease ATPase subunit HslU (Azotobacter vinelandii (strain DJ / ATCC BAA-1303)).